The sequence spans 71 residues: uncharacterized protein (71 aa).

It belongs to the varicellovirus ORF57 protein family.

This is an uncharacterized protein from Homo sapiens (Human).